The primary structure comprises 296 residues: Inactive uridine phosphorylase B (296 aa).

This sequence belongs to the PNP/UDP phosphorylase family. In terms of assembly, homodimer.

The polypeptide is Inactive uridine phosphorylase B (Schistosoma mansoni (Blood fluke)).